A 436-amino-acid chain; its full sequence is Transcription factor MYB124 (436 aa).

Positions 1–11 are enriched in basic residues; the sequence is MEDTKKKKKKN. The tract at residues 1 to 23 is disordered; it reads MEDTKKKKKKNINNNQDSKKKER. The short motif at 8 to 15 is the Nuclear localization signal 1 element; that stretch reads KKKNINNN. 2 consecutive HTH myb-type domains span residues 20–71 and 72–126; these read KKER…YTYL and NSDF…KKRA. 2 DNA-binding regions (H-T-H motif) span residues 48–71 and 99–122; these read WAII…YTYL and WTEI…TTLC. A Nuclear localization signal 2 motif is present at residues 151–158; it reads PRKSENET. The disordered stretch occupies residues 309 to 328; that stretch reads SWRQPDLHDSPASSEYSSGS. Positions 319–328 are enriched in polar residues; that stretch reads PASSEYSSGS.

In terms of assembly, interacts with RBR1. In terms of tissue distribution, expressed in all shoot organs with higher levels in leaves, stems, flowers, siliques and floral buds. Also detected in roots tips.

The protein localises to the nucleus. Its function is as follows. Transcription factor that binds to DNA in promoters cis-regulatory element 5'-GGCGCGC-3' of cell cycle genes, including cyclins, cyclin-dependent kinases (CDKs), and components of the pre-replication complex. Binds to DNA in promoters cis-regulatory element 5'-AGCCG-3' of auxin regulated genes (e.g. PIN3 and PIN7). Together with FAMA and MYB88, ensures that stomata contain just two guard cells (GCs) by enforcing a single symmetric precursor cell division before stomatal maturity. Represses the expression of the mitosis-inducing factors CDKB1-1 and CDKA-1, specifically required for the last guard mother cells (GMC) symmetric divisions in the stomatal pathway. Represses CYCA2-3 in newly formed guard cells. Together with MYB88, regulates stomata spacing by restricting divisions late in the stomatal cell lineage thus limiting the number of GMC divisions. In collaboration with CDKB1-1 and CDKB1-2, restrict the G1/S transition and chloroplast and nuclear number during stomatal formation, and normally maintain fate and developmental progression throughout the stomatal cell lineage. Also involved in the shape regulation of pavement cells. Involved in sensing and/or transducing abiotic stress (e.g. drought and salt), probably via the positive regulation of NAC019. Regulates female reproduction being required for entry into megasporogenesis, probably via the regulation of cell cycle genes. Promotes histone H3K27me3 marks and represses stem cell gene expression. Required for lateral roots (LRs) initiation via the regulation of PIN3 expression in an auxin-dependent manner. Involved in responses to gravity stimulation in primary roots by regulating the transcription of PIN3 and PIN7 in gravity-sensing cells, thus modulating auxin asymmetric redistribution. In Arabidopsis thaliana (Mouse-ear cress), this protein is Transcription factor MYB124.